The following is a 181-amino-acid chain: Oligoribonuclease (181 aa).

One can recognise an Exonuclease domain in the interval 8-171; that stretch reads LIWIDLEMTG…DDIRESVAEL (164 aa). The active site involves Y129.

This sequence belongs to the oligoribonuclease family.

The protein localises to the cytoplasm. In terms of biological role, 3'-to-5' exoribonuclease specific for small oligoribonucleotides. In Photorhabdus laumondii subsp. laumondii (strain DSM 15139 / CIP 105565 / TT01) (Photorhabdus luminescens subsp. laumondii), this protein is Oligoribonuclease.